A 368-amino-acid chain; its full sequence is tRNA/tmRNA (uracil-C(5))-methyltransferase (368 aa).

Residues Q186, Y214, N219, E235, and D295 each coordinate S-adenosyl-L-methionine. The Nucleophile role is filled by C320. Residue E354 is the Proton acceptor of the active site.

It belongs to the class I-like SAM-binding methyltransferase superfamily. RNA M5U methyltransferase family. TrmA subfamily.

It catalyses the reaction uridine(54) in tRNA + S-adenosyl-L-methionine = 5-methyluridine(54) in tRNA + S-adenosyl-L-homocysteine + H(+). The catalysed reaction is uridine(341) in tmRNA + S-adenosyl-L-methionine = 5-methyluridine(341) in tmRNA + S-adenosyl-L-homocysteine + H(+). Its function is as follows. Dual-specificity methyltransferase that catalyzes the formation of 5-methyluridine at position 54 (m5U54) in all tRNAs, and that of position 341 (m5U341) in tmRNA (transfer-mRNA). This chain is tRNA/tmRNA (uracil-C(5))-methyltransferase, found in Aromatoleum aromaticum (strain DSM 19018 / LMG 30748 / EbN1) (Azoarcus sp. (strain EbN1)).